Here is a 1755-residue protein sequence, read N- to C-terminus: E3 ubiquitin-protein ligase UBR2 (1755 aa).

Ala2 bears the N-acetylalanine mark. Residue Lys94 forms a Glycyl lysine isopeptide (Lys-Gly) (interchain with G-Cter in ubiquitin) linkage. A UBR-type zinc finger spans residues 97–168 (HLCGRVFKVG…EGPYCQKHEL (72 aa)). Zn(2+) contacts are provided by Cys99, Cys112, Cys115, Cys124, Cys127, His133, and His136. An a peptide-binding site is contributed by Phe148. Cys149 contributes to the Zn(2+) binding site. Position 150 (Asp150) interacts with a peptide. Cys151 provides a ligand contact to Zn(2+). An a peptide-binding site is contributed by Asp153. Lys158 is covalently cross-linked (Glycyl lysine isopeptide (Lys-Gly) (interchain with G-Cter in ubiquitin)). Residue Cys163 participates in Zn(2+) binding. Lys165 participates in a covalent cross-link: Glycyl lysine isopeptide (Lys-Gly) (interchain with G-Cter in ubiquitin). His166 lines the Zn(2+) pocket. Residues Lys248, Lys255, and Lys470 each participate in a glycyl lysine isopeptide (Lys-Gly) (interchain with G-Cter in ubiquitin) cross-link. Ser476 is subject to Phosphoserine. Residues Lys488, Lys568, Lys779, and Lys789 each participate in a glycyl lysine isopeptide (Lys-Gly) (interchain with G-Cter in ubiquitin) cross-link. The segment at 1004–1034 (ESSPTSPVAETEGTIMEESSRDKDKAERKRK) is disordered. Residues 1019-1054 (MEESSRDKDKAERKRKAEIARLRREKIMAQMSEMQR) adopt a coiled-coil conformation. The segment covering 1021-1034 (ESSRDKDKAERKRK) has biased composition (basic and acidic residues). The Zn(2+) site is built by Cys1108, Cys1111, Cys1168, His1170, His1173, Cys1176, Cys1210, and Cys1213. The RING-type; atypical zinc finger occupies 1108–1214 (CILCQEEQEV…NGEFLCPLCE (107 aa)). Residues 1261-1287 (RKEESTPNNASTKNSENVDELQLPEGF) are disordered. Over residues 1266 to 1275 (TPNNASTKNS) the composition is skewed to polar residues. Glycyl lysine isopeptide (Lys-Gly) (interchain with G-Cter in ubiquitin) cross-links involve residues Lys1496, Lys1599, and Lys1689. At Ser1694 the chain carries Phosphoserine. Tyr1697 bears the Phosphotyrosine mark.

This sequence belongs to the E3 ubiquitin-protein ligase UBR1-like family. Interacts with UBE2B; promotes the UBE2B-H2A interaction and the ubiquitination of histone H2A by UBE2B and UBR2. Interacts with RECQL4. Interacts with TEX19; does not lead to TEX19 degradation and stabilizes it. Interacts with CASP8. Interacts with ATXN3. Interacts with UBE2O. Post-translationally, dephosphorylated by DUSP22 at Ser-1694 and Tyr-1697, leading to subsequent ubiquitination and proteasomal degradation. In terms of processing, 'Lys-48'-linked ubiquitinated at Lys-94, Lys-779 and Lys-1599 following DUSP22-mediated dephosphorylation of Ser-1694 and Tyr-1697 which promotes UBR2 interaction with the SCF(FBW1A) E3 ubiquitin-protein ligase complex. Broadly expressed, with highest levels in skeletal muscle, kidney and pancreas. Present in acinar cells of the pancreas (at protein level).

The protein resides in the nucleus. It localises to the chromosome. The enzyme catalyses S-ubiquitinyl-[E2 ubiquitin-conjugating enzyme]-L-cysteine + [acceptor protein]-L-lysine = [E2 ubiquitin-conjugating enzyme]-L-cysteine + N(6)-ubiquitinyl-[acceptor protein]-L-lysine.. It participates in protein modification; protein ubiquitination. E3 ubiquitin-protein ligase which is a component of the N-end rule pathway. Recognizes and binds to proteins bearing specific N-terminal residues (N-degrons) that are destabilizing according to the N-end rule, leading to their ubiquitination and subsequent degradation. Recognizes both type-1 and type-2 N-degrons, containing positively charged amino acids (Arg, Lys and His) and bulky and hydrophobic amino acids, respectively. Does not ubiquitinate proteins that are acetylated at the N-terminus. In contrast, it strongly binds methylated N-degrons. Plays a critical role in chromatin inactivation and chromosome-wide transcriptional silencing during meiosis via ubiquitination of histone H2A. Binds leucine and is a negative regulator of the leucine-mTOR signaling pathway, thereby controlling cell growth. Required for spermatogenesis, promotes, with Tex19.1, SPO11-dependent recombination foci to accumulate and drive robust homologous chromosome synapsis. Polyubiquitinates LINE-1 retrotransposon encoded, LIRE1, which induces degradation, inhibiting LINE-1 retrotransposon mobilization. Catalyzes ubiquitination and degradation of the N-terminal part of NLRP1 following NLRP1 activation by pathogens and other damage-associated signals: ubiquitination promotes degradation of the N-terminal part and subsequent release of the cleaved C-terminal part of NLRP1, which polymerizes and forms the NLRP1 inflammasome followed by host cell pyroptosis. Plays a role in T-cell receptor signaling by inducing 'Lys-63'-linked ubiquitination of lymphocyte cell-specific kinase LCK. This activity is regulated by DUSP22, which induces 'Lys-48'-linked ubiquitination of UBR2, leading to its proteasomal degradation by SCF E3 ubiquitin-protein ligase complex. This is E3 ubiquitin-protein ligase UBR2 (UBR2) from Homo sapiens (Human).